Consider the following 597-residue polypeptide: Fructan 1-exohydrolase (597 aa).

Residues 1–15 (MAQAWAFLLPVLVFG) form the signal peptide. Residue Asp-76 is part of the active site. 3 N-linked (GlcNAc...) asparagine glycosylation sites follow: Asn-169, Asn-237, and Asn-249. Residues Cys-447 and Cys-493 are joined by a disulfide bond. Asn-568 carries N-linked (GlcNAc...) asparagine glycosylation.

It belongs to the glycosyl hydrolase 32 family.

The catalysed reaction is Hydrolysis of terminal, non-reducing (2-&gt;1)-linked beta-D-fructofuranose residues in fructans.. With respect to regulation, inhibited by sucrose. Functionally, hydrolyzes inulin-type beta-(2,1)-fructans. May play a role as a beta-(2,1)-trimmer during graminan biosynthesis. The protein is Fructan 1-exohydrolase of Triticum urartu (Red wild einkorn).